Here is a 1627-residue protein sequence, read N- to C-terminus: Type III effector DspE (1627 aa).

Composition is skewed to polar residues over residues 22-44 (AKTS…SLIQ) and 59-74 (GNGS…STTL). 2 disordered regions span residues 22-102 (AKTS…GPIQ) and 436-464 (QTQA…TPGW). 3 short sequence motifs (wxxxE) span residues 464-468 (WNLSD), 514-520 (WEASSVE), and 660-667 (WQNAANHD).

This sequence belongs to the AvrE family.

It is found in the secreted. It localises to the host cell. In terms of biological role, major virulence factor that may function as a water- and solute-permeable channel dedicated to creating osmotic/water potential perturbation and a water- and nutrient-rich apoplast in which bacteria multiply within the infected plant tissues. Functionally, required for plant cell death in N.benthamiana leaves and leaf cell death in S.tuberosum. Essential for pathogenicity. Does not suppress callose formation. This chain is Type III effector DspE, found in Pectobacterium carotovorum (Erwinia carotovora).